Consider the following 950-residue polypeptide: Protocadherin alpha-9 (950 aa).

The signal sequence occupies residues 1-29 (MLYSSRGDPEGQPLLLSLLILAMWVVGSG). 6 consecutive Cadherin domains span residues 30–133 (QLHY…PPVF), 134–242 (PATQ…APVF), 243–350 (DRTL…APQL), 351–455 (TIKT…APAF), 456–565 (AQPE…APAL), and 588–678 (GVVV…APKS). The Extracellular portion of the chain corresponds to 30-697 (QLHYSVPEEA…GPEVTLVDVN (668 aa)). 2 N-linked (GlcNAc...) asparagine glycosylation sites follow: Asn-254 and Asn-265. A glycan (N-linked (GlcNAc...) asparagine) is linked at Asn-548. The chain crosses the membrane as a helical span at residues 698–718 (VYLIIAICAVSSLLVLTLLLY). Residues 719-950 (TVLRCSAMPT…GNSTTDNSDQ (232 aa)) are Cytoplasmic-facing. The PXXP 1 repeat unit spans residues 734-737 (PGKP). The 5 X 4 AA repeats of P-X-X-P stretch occupies residues 734–894 (PGKPTLVCSS…PDKFIIPGSP (161 aa)). Disordered regions lie at residues 759-808 (CSGE…DWRY) and 827-950 (ILRA…NSDQ). Over residues 789-798 (PSASSDSSGK) the composition is skewed to polar residues. PXXP repeat units follow at residues 799–802 (PRQP), 832–835 (PGGP), 873–876 (PGNP), and 891–894 (PGSP). Residues 909–923 (DKSDFITFGKKEETK) show a composition bias toward basic and acidic residues.

It localises to the cell membrane. Its function is as follows. Potential calcium-dependent cell-adhesion protein. May be involved in the establishment and maintenance of specific neuronal connections in the brain. This Pan troglodytes (Chimpanzee) protein is Protocadherin alpha-9 (PCDHA9).